Consider the following 345-residue polypeptide: Tetraacyldisaccharide 4'-kinase (345 aa).

Residue Thr54–Thr61 coordinates ATP.

It belongs to the LpxK family.

The enzyme catalyses a lipid A disaccharide + ATP = a lipid IVA + ADP + H(+). It participates in glycolipid biosynthesis; lipid IV(A) biosynthesis; lipid IV(A) from (3R)-3-hydroxytetradecanoyl-[acyl-carrier-protein] and UDP-N-acetyl-alpha-D-glucosamine: step 6/6. Its function is as follows. Transfers the gamma-phosphate of ATP to the 4'-position of a tetraacyldisaccharide 1-phosphate intermediate (termed DS-1-P) to form tetraacyldisaccharide 1,4'-bis-phosphate (lipid IVA). This Allorhizobium ampelinum (strain ATCC BAA-846 / DSM 112012 / S4) (Agrobacterium vitis (strain S4)) protein is Tetraacyldisaccharide 4'-kinase.